Reading from the N-terminus, the 1412-residue chain is Erbin (1412 aa).

LRR repeat units follow at residues 23–44 (TVTTLDYSHCSLEQVPKEIFTF), 47–68 (TLEELYLDANQIEELPKQLFNC), 70–91 (SLHKLSLPDNDLTTLPASIANL), 93–114 (NLRELDVSKNGIQEFPENIKNC), 116–137 (VLTIVEASVNPISKLPDGFSQL), 139–161 (NLTQLYLNDAFLEFLPANFGRLT), 162–183 (KLQILELRENQLKMLPKTMNRL), 185–206 (QLERLDLGSNEFTEVPEVLEQL), 208–229 (GLKEFWMDANRLTFIPGFIGSL), 231–252 (QLTYLDVSKNNIEMVEEGISTC), 254–275 (NLQDLLLSSNSLQQLPETIGSL), 277–298 (NITTLKIDENQLMYLPDSIGGL), 300–321 (SVEELDCSFNEVEALPSSIGQL), 323–344 (NLRTFAADHNYLQQLPPEIGSW), 346–367 (NITVLFLHSNKLETLPEEMGDM), 369–391 (KLKVINLSDNRLKNLPFSFTKLQ), and 392–413 (QLTAMWLSDNQSKPLIPLQKET). Phosphoserine occurs at positions 440 and 444. Disordered regions lie at residues 464–489 (CDEDKDEREAPPREGNLKRYPTPYPD) and 506–542 (KDEETNEDSGRDLKPHEDQQDINKDVGVKTSESTTTV). A compositionally biased stretch (basic and acidic residues) spans 470 to 480 (EREAPPREGNL). Tyr483 carries the phosphotyrosine modification. Phosphothreonine is present on Thr485. Over residues 506–532 (KDEETNEDSGRDLKPHEDQQDINKDVG) the composition is skewed to basic and acidic residues. The span at 533-542 (VKTSESTTTV) shows a compositional bias: low complexity. Phosphoserine occurs at positions 569, 598, 602, 603, and 620. The disordered stretch occupies residues 615-681 (PLIETSINQP…TDSSQDTSLC (67 aa)). Residues 632–641 (NKKDDTKETD) show a composition bias toward basic and acidic residues. Over residues 650–662 (NSNQNNSNCSSPS) the composition is skewed to low complexity. Residues 663-681 (RMSDSVSLNTDSSQDTSLC) are compositionally biased toward polar residues. Phosphoserine is present on Ser715. Residues 803-867 (ETEHLENGNK…PQKSGPVGSV (65 aa)) are disordered. Over residues 817–835 (ESVNKVNGHSEETSQSPNR) the composition is skewed to polar residues. Ser852, Ser857, and Ser872 each carry phosphoserine. A Phosphothreonine modification is found at Thr917. Tyr920 bears the Phosphotyrosine mark. A Phosphoserine modification is found at Ser931. Position 972 is a phosphotyrosine (Tyr972). 2 disordered regions span residues 997 to 1021 (NPQIDHASFPPQLLPRSESTENQSY) and 1075 to 1192 (QRQS…KSKV). Polar residues predominate over residues 1075 to 1086 (QRQSSVSSTASV). At Tyr1104 the chain carries Phosphotyrosine. Over residues 1157 to 1171 (MSVSDFNYSRTSPSK) the composition is skewed to polar residues. Phosphoserine occurs at positions 1158, 1179, and 1286. The 90-residue stretch at 1321-1410 (EIRVRVEKDP…TVELIIVREV (90 aa)) folds into the PDZ domain.

Belongs to the LAP (LRR and PDZ) protein family. In terms of assembly, interacts with ERBB2, BPAG1 and ITGB4. May favor the localization of ERBB2, by restricting its presence to the basolateral membrane of epithelial cells. Also found to interact with ARVCF and delta catenin. Interacts (via C-terminus) with DST Isoform 3 (via N-terminus). Interacts with NOD2 (via CARD domain). As to expression, highly expressed in brain, heart, kidney, muscle and stomach, followed by liver, spleen and intestine.

Its subcellular location is the cell junction. The protein resides in the hemidesmosome. It is found in the nucleus membrane. The protein localises to the basolateral cell membrane. Acts as an adapter for the receptor ERBB2, in epithelia. By binding the unphosphorylated 'Tyr-1248' of receptor ERBB2, it may contribute to stabilize this unphosphorylated state. Inhibits NOD2-dependent NF-kappa-B signaling and pro-inflammatory cytokine secretion. This chain is Erbin, found in Homo sapiens (Human).